The primary structure comprises 343 residues: Probable xyloglucan endotransglucosylase/hydrolase protein 30 (343 aa).

Residues 1–23 form the signal peptide; it reads MSKSSYNHIFILILCLCLRSSSA. Residues 24–224 form the GH16 domain; sequence FTNLNTLSFE…YKFAPFVAEF (201 aa). Glu109 serves as the catalytic Nucleophile. The Proton donor role is filled by Glu113. Residues Glu113 and 126 to 128 contribute to the xyloglucan site; that span reads QTN. The N-linked (GlcNAc...) asparagine glycan is linked to Asn132. Residues 136–140, 203–204, Gly208, and Arg285 contribute to the xyloglucan site; these read HRGRE and DW. Cys280 and Cys293 form a disulfide bridge. Residues 306–343 are disordered; the sequence is TGRLKFGGTEARERRRNRRQQRRPEIEIESDPDDRKLL.

It belongs to the glycosyl hydrolase 16 family. XTH group 3 subfamily. In terms of processing, contains at least one intrachain disulfide bond essential for its enzymatic activity. As to expression, predominantly expressed in green siliques.

Its subcellular location is the secreted. It is found in the cell wall. It localises to the extracellular space. The protein localises to the apoplast. The enzyme catalyses breaks a beta-(1-&gt;4) bond in the backbone of a xyloglucan and transfers the xyloglucanyl segment on to O-4 of the non-reducing terminal glucose residue of an acceptor, which can be a xyloglucan or an oligosaccharide of xyloglucan.. In terms of biological role, catalyzes xyloglucan endohydrolysis (XEH) and/or endotransglycosylation (XET). Cleaves and religates xyloglucan polymers, an essential constituent of the primary cell wall, and thereby participates in cell wall construction of growing tissues. This Arabidopsis thaliana (Mouse-ear cress) protein is Probable xyloglucan endotransglucosylase/hydrolase protein 30 (XTH30).